The primary structure comprises 111 residues: MSLAFIDPMIIRSLNKSKLRKKILYLLYKMYPHGIYLSEISRRVRSDPSNVLGCLKGMNGRYNGHFSLIELGLVECVERGGVKIYKLTDYGKKIVEVLKDQDSDFIESLRW.

This is an uncharacterized protein from Methanocaldococcus jannaschii (strain ATCC 43067 / DSM 2661 / JAL-1 / JCM 10045 / NBRC 100440) (Methanococcus jannaschii).